A 548-amino-acid polypeptide reads, in one-letter code: Membrane protein insertase YidC (548 aa).

A helical membrane pass occupies residues 6 to 26 (NLLVIALLFVSFMIWQAWEQD). Residues 28 to 54 (NPQPQTQQTTQTTTTAAGSAADQGVPA) form a disordered region. Over residues 29-42 (PQPQTQQTTQTTTT) the composition is skewed to low complexity. 4 consecutive transmembrane segments (helical) span residues 350–370 (FVGNWGFSIIIITFIVRGIMY), 424–444 (FPLIIQMPIFLALYYMLMGSI), 458–478 (LSAQDPYYILPILMGVTMFFI), and 499–519 (PVIFTVFFLWFPSGLVLYYIV).

Belongs to the OXA1/ALB3/YidC family. Type 1 subfamily. As to quaternary structure, interacts with the Sec translocase complex via SecD. Specifically interacts with transmembrane segments of nascent integral membrane proteins during membrane integration.

The protein resides in the cell inner membrane. Functionally, required for the insertion and/or proper folding and/or complex formation of integral membrane proteins into the membrane. Involved in integration of membrane proteins that insert both dependently and independently of the Sec translocase complex, as well as at least some lipoproteins. Aids folding of multispanning membrane proteins. The sequence is that of Membrane protein insertase YidC from Salmonella arizonae (strain ATCC BAA-731 / CDC346-86 / RSK2980).